A 148-amino-acid chain; its full sequence is MTIWIDADACPKMIKDILFRAAIRTNTNLILVANSYLTYPNSPFIRSVLVEKGYDRADHYITSHMKAKDLVITADIPLAAEVIVKQGLAMSPRGELFTANNIKQRLTLRDINEQLRSAGERTGGPSALSAKEKTNFANALDRWLAKSK.

The protein belongs to the UPF0178 family.

This chain is UPF0178 protein lpg0089, found in Legionella pneumophila subsp. pneumophila (strain Philadelphia 1 / ATCC 33152 / DSM 7513).